A 249-amino-acid polypeptide reads, in one-letter code: MKKIEVRDLDLFYGEVQALKKINLDVEPNSVLALIGPSGCGKSTFIRTLNRMNDLIEGVKISGTVLLDGKDIYKEVDVIELRKKVGMVFQKPNPFPMTVYDNVAYGPRIHGIRDKRTLNEIVEKSLKAAALWDEVKDRLHHSALSLSGGQQQRLCIARTLAVEPEVILMDEPTSALDPISTMKIEELIEELKKKYTIIIVTHNMQQAGRVSDYTAFFLNGELVEWGPTDQVFYNPKDKRTEDYITGRFG.

Residues 4 to 244 enclose the ABC transporter domain; the sequence is IEVRDLDLFY…PKDKRTEDYI (241 aa). 36 to 43 contacts ATP; it reads GPSGCGKS.

It belongs to the ABC transporter superfamily. Phosphate importer (TC 3.A.1.7) family. In terms of assembly, the complex is composed of two ATP-binding proteins (PstB), two transmembrane proteins (PstC and PstA) and a solute-binding protein (PstS).

It is found in the cell membrane. The catalysed reaction is phosphate(out) + ATP + H2O = ADP + 2 phosphate(in) + H(+). In terms of biological role, part of the ABC transporter complex PstSACB involved in phosphate import. Responsible for energy coupling to the transport system. The protein is Phosphate import ATP-binding protein PstB 2 of Caldanaerobacter subterraneus subsp. tengcongensis (strain DSM 15242 / JCM 11007 / NBRC 100824 / MB4) (Thermoanaerobacter tengcongensis).